A 336-amino-acid chain; its full sequence is tRNA-cytidine(32) 2-sulfurtransferase (336 aa).

Residues 11–23 (TAAAPAGTGEATP) show a composition bias toward low complexity. Positions 11 to 31 (TAAAPAGTGEATPVHARARSP) are disordered. A PP-loop motif motif is present at residues 75 to 80 (SGGKDS). Cys-150, Cys-153, and Cys-241 together coordinate [4Fe-4S] cluster.

Belongs to the TtcA family. As to quaternary structure, homodimer. The cofactor is Mg(2+). It depends on [4Fe-4S] cluster as a cofactor.

It localises to the cytoplasm. The enzyme catalyses cytidine(32) in tRNA + S-sulfanyl-L-cysteinyl-[cysteine desulfurase] + AH2 + ATP = 2-thiocytidine(32) in tRNA + L-cysteinyl-[cysteine desulfurase] + A + AMP + diphosphate + H(+). The protein operates within tRNA modification. Functionally, catalyzes the ATP-dependent 2-thiolation of cytidine in position 32 of tRNA, to form 2-thiocytidine (s(2)C32). The sulfur atoms are provided by the cysteine/cysteine desulfurase (IscS) system. This is tRNA-cytidine(32) 2-sulfurtransferase from Paraburkholderia xenovorans (strain LB400).